Consider the following 146-residue polypeptide: Large ribosomal subunit protein uL15 (146 aa).

A compositionally biased stretch (basic and acidic residues) spans 1-13; it reads MKLHELKPAEGSR. Positions 1–51 are disordered; that stretch reads MKLHELKPAEGSRKVRNRVGRGTSSGNGKTSGRGQKGQKARSGGGVRLGFE. 2 stretches are compositionally biased toward gly residues: residues 23–35 and 42–51; these read TSSGNGKTSGRGQ and SGGGVRLGFE.

This sequence belongs to the universal ribosomal protein uL15 family. As to quaternary structure, part of the 50S ribosomal subunit.

In terms of biological role, binds to the 23S rRNA. In Streptococcus pneumoniae serotype 2 (strain D39 / NCTC 7466), this protein is Large ribosomal subunit protein uL15.